The primary structure comprises 620 residues: 1-deoxy-D-xylulose-5-phosphate synthase (620 aa).

Thiamine diphosphate is bound by residues histidine 80 and 121–123 (GHS). Residue aspartate 152 participates in Mg(2+) binding. Thiamine diphosphate-binding positions include 153-154 (GA), asparagine 181, tyrosine 288, and glutamate 370. Asparagine 181 lines the Mg(2+) pocket.

This sequence belongs to the transketolase family. DXPS subfamily. In terms of assembly, homodimer. It depends on Mg(2+) as a cofactor. Thiamine diphosphate serves as cofactor.

The enzyme catalyses D-glyceraldehyde 3-phosphate + pyruvate + H(+) = 1-deoxy-D-xylulose 5-phosphate + CO2. The protein operates within metabolic intermediate biosynthesis; 1-deoxy-D-xylulose 5-phosphate biosynthesis; 1-deoxy-D-xylulose 5-phosphate from D-glyceraldehyde 3-phosphate and pyruvate: step 1/1. Its function is as follows. Catalyzes the acyloin condensation reaction between C atoms 2 and 3 of pyruvate and glyceraldehyde 3-phosphate to yield 1-deoxy-D-xylulose-5-phosphate (DXP). The sequence is that of 1-deoxy-D-xylulose-5-phosphate synthase from Salmonella choleraesuis (strain SC-B67).